We begin with the raw amino-acid sequence, 148 residues long: Transcriptional regulator MraZ (148 aa).

2 SpoVT-AbrB domains span residues 5–51 (VSIL…PEPN) and 80–123 (AETL…NAEE).

It belongs to the MraZ family. Forms oligomers.

Its subcellular location is the cytoplasm. The protein resides in the nucleoid. The chain is Transcriptional regulator MraZ from Chromobacterium violaceum (strain ATCC 12472 / DSM 30191 / JCM 1249 / CCUG 213 / NBRC 12614 / NCIMB 9131 / NCTC 9757 / MK).